The primary structure comprises 138 residues: Nucleoside diphosphate kinase (138 aa).

ATP-binding residues include Lys-9, Phe-57, Arg-85, Thr-91, Arg-102, and Asn-112. His-115 acts as the Pros-phosphohistidine intermediate in catalysis.

The protein belongs to the NDK family. As to quaternary structure, homotetramer. The cofactor is Mg(2+).

The protein localises to the cytoplasm. The catalysed reaction is a 2'-deoxyribonucleoside 5'-diphosphate + ATP = a 2'-deoxyribonucleoside 5'-triphosphate + ADP. The enzyme catalyses a ribonucleoside 5'-diphosphate + ATP = a ribonucleoside 5'-triphosphate + ADP. Major role in the synthesis of nucleoside triphosphates other than ATP. The ATP gamma phosphate is transferred to the NDP beta phosphate via a ping-pong mechanism, using a phosphorylated active-site intermediate. In Exiguobacterium sibiricum (strain DSM 17290 / CCUG 55495 / CIP 109462 / JCM 13490 / 255-15), this protein is Nucleoside diphosphate kinase.